Here is a 353-residue protein sequence, read N- to C-terminus: Major outer membrane protein (353 aa).

Positions 1–20 (MKKTIVALAVAAVAATSANA) are cleaved as a signal peptide.

As to quaternary structure, disulfide bond interactions within and between MOMP molecules and other components form high molecular-weight oligomers.

The protein resides in the cell outer membrane. In terms of biological role, structural rigidity of the outer membrane of elementary bodies and porin forming, permitting diffusion of solutes through the intracellular reticulate body membrane. This is Major outer membrane protein (ompH) from Pasteurella multocida.